Reading from the N-terminus, the 665-residue chain is Soluble lamin-associated protein of 75 kDa (665 aa).

The disordered stretch occupies residues 309–665 (AFASTSEGPE…GPGKKKAKLT (357 aa)). Polar residues predominate over residues 311–326 (ASTSEGPEKTPVSTRT). Positions 327–338 (RSSHLKRPKIGK) are enriched in basic residues. Residues Ser-348 and Ser-377 each carry the phosphoserine modification. Positions 376–397 (SSEEFLEEEPEQGVIDFEDESG) are enriched in acidic residues. The segment covering 412–421 (QKQDGDKDSA) has biased composition (basic and acidic residues). Positions 440 to 451 (TEDEDSTSEGLE) are enriched in acidic residues. Ser-447 and Ser-512 each carry phosphoserine. Composition is skewed to polar residues over residues 521–533 (LGSS…VSNI) and 553–566 (VSQN…SSVE). Phosphoserine occurs at positions 610, 613, and 630. Positions 646–665 (NLRRKAKGHKGPGKKKAKLT) are enriched in basic residues.

It belongs to the FAM169 family.

The protein localises to the nucleus envelope. It localises to the nucleus inner membrane. This is Soluble lamin-associated protein of 75 kDa (Fam169a) from Mus musculus (Mouse).